The following is a 174-amino-acid chain: MRDLQQLLDELKDMSFFNPGEMCIIGCSTSEVIGKRIGSVGSMDVAKEIYENLKQLEIDTGVTFAFQGCEHINRAVTIERANFNPLTMEEVTVVPDVHAGGSLSTYAYQQMEDPIVVEHITVSKGIDIGQTLIGMHIKHVCVPVRTSVKQIGEAIVTIATSRPKKIGGERAKYQ.

Belongs to the UPF0340 family.

This is UPF0340 protein SE_1711 from Staphylococcus epidermidis (strain ATCC 12228 / FDA PCI 1200).